The primary structure comprises 621 residues: Phytoene desaturase (621 aa).

The N-terminal stretch at Met-1 to Ala-23 is a signal peptide. Positions His-394–Lys-425 are disordered. A compositionally biased stretch (polar residues) spans Gln-397 to Pro-414. A helical membrane pass occupies residues Trp-598–Met-618.

It belongs to the carotenoid/retinoid oxidoreductase family. NAD(+) is required as a cofactor.

The protein localises to the membrane. The catalysed reaction is 15-cis-phytoene + 5 A = all-trans-3,4-didehydrolycopene + 5 AH2. Its pathway is carotenoid biosynthesis; lycopene biosynthesis. Functionally, phytoene desaturase involved in the carotenoid biosynthesis pathway. Converts phytoene into 3,4-didehydrolycopene via the intermediary of phytofluene, zeta-carotene, neurosporene and lycopene, by introducing up to five double bonds into phytoene. The chain is Phytoene desaturase (PDH1) from Cercospora nicotianae (Barn spot disease fungus).